A 227-amino-acid chain; its full sequence is Octanoyltransferase (227 aa).

The BPL/LPL catalytic domain occupies 35-222 (EAYENRIIMC…ELGRLLNEKK (188 aa)). Substrate-binding positions include 80–87 (RGGDITYH), 152–154 (AIG), and 165–167 (GLA). The active-site Acyl-thioester intermediate is Cys-183.

It belongs to the LipB family.

Its subcellular location is the cytoplasm. The catalysed reaction is octanoyl-[ACP] + L-lysyl-[protein] = N(6)-octanoyl-L-lysyl-[protein] + holo-[ACP] + H(+). It participates in protein modification; protein lipoylation via endogenous pathway; protein N(6)-(lipoyl)lysine from octanoyl-[acyl-carrier-protein]: step 1/2. Catalyzes the transfer of endogenously produced octanoic acid from octanoyl-acyl-carrier-protein onto the lipoyl domains of lipoate-dependent enzymes. Lipoyl-ACP can also act as a substrate although octanoyl-ACP is likely to be the physiological substrate. The protein is Octanoyltransferase of Bacteroides thetaiotaomicron (strain ATCC 29148 / DSM 2079 / JCM 5827 / CCUG 10774 / NCTC 10582 / VPI-5482 / E50).